The following is a 150-amino-acid chain: Globin-1 (150 aa).

Residues 11 to 150 (ALTAAEKATI…MICILLRSSY (140 aa)) form the Globin domain. Heme b contacts are provided by histidine 74 and histidine 106.

It belongs to the globin family. Monomer.

The chain is Globin-1 from Petromyzon marinus (Sea lamprey).